Consider the following 158-residue polypeptide: MVDKVPMTQNGFSKLQEELRWRQQEERPRIIEAIAEARAHGDLSENAEYHAAKEAQSHNEGRVSELEDLTARAEVIDLSKMSGSKIKFGATVKLIDEDTDEEKIYQIVGDQEADVKAGRISISSPIARAMIGKEAGDSIEVVAPGGSKAYEIIAVNWG.

Belongs to the GreA/GreB family.

Necessary for efficient RNA polymerase transcription elongation past template-encoded arresting sites. The arresting sites in DNA have the property of trapping a certain fraction of elongating RNA polymerases that pass through, resulting in locked ternary complexes. Cleavage of the nascent transcript by cleavage factors such as GreA or GreB allows the resumption of elongation from the new 3'terminus. GreA releases sequences of 2 to 3 nucleotides. The sequence is that of Transcription elongation factor GreA from Allorhizobium ampelinum (strain ATCC BAA-846 / DSM 112012 / S4) (Agrobacterium vitis (strain S4)).